A 382-amino-acid polypeptide reads, in one-letter code: Chaperone protein DnaJ (382 aa).

The J domain maps to 5-70 (DYYEVLGVSR…DKKAAYDRYG (66 aa)). The CR-type zinc-finger motif lies at 141–219 (GVQKTINVPA…CHGAGRVEKE (79 aa)). Zn(2+)-binding residues include C154, C157, C171, C174, C193, C196, C207, and C210. CXXCXGXG motif repeat units follow at residues 154-161 (CDACKGTG), 171-178 (CPTCSGMG), 193-200 (CPTCNGMG), and 207-214 (CKVCHGAG).

The protein belongs to the DnaJ family. In terms of assembly, homodimer. Zn(2+) is required as a cofactor.

The protein localises to the cytoplasm. Functionally, participates actively in the response to hyperosmotic and heat shock by preventing the aggregation of stress-denatured proteins and by disaggregating proteins, also in an autonomous, DnaK-independent fashion. Unfolded proteins bind initially to DnaJ; upon interaction with the DnaJ-bound protein, DnaK hydrolyzes its bound ATP, resulting in the formation of a stable complex. GrpE releases ADP from DnaK; ATP binding to DnaK triggers the release of the substrate protein, thus completing the reaction cycle. Several rounds of ATP-dependent interactions between DnaJ, DnaK and GrpE are required for fully efficient folding. Also involved, together with DnaK and GrpE, in the DNA replication of plasmids through activation of initiation proteins. The protein is Chaperone protein DnaJ of Cereibacter sphaeroides (strain ATCC 17029 / ATH 2.4.9) (Rhodobacter sphaeroides).